A 625-amino-acid polypeptide reads, in one-letter code: Chaperone protein HtpG (625 aa).

Residues M1–R337 are a; substrate-binding. The segment at E338–K552 is b. A c region spans residues L553–Q625.

It belongs to the heat shock protein 90 family. Homodimer.

It is found in the cytoplasm. Molecular chaperone. Has ATPase activity. The sequence is that of Chaperone protein HtpG from Buchnera aphidicola subsp. Schizaphis graminum (strain Sg).